The following is a 722-amino-acid chain: Fatty acid oxidation complex subunit alpha (722 aa).

The segment at 1 to 189 (MIYQGKSLSA…AQGAIDAVVE (189 aa)) is enoyl-CoA hydratase/isomerase. Aspartate 296 contacts substrate. The 3-hydroxyacyl-CoA dehydrogenase stretch occupies residues 311–722 (TKAVNKAAVL…SYFTTDVKLA (412 aa)). NAD(+) contacts are provided by residues methionine 325, aspartate 344, 401-403 (VVE), lysine 408, and serine 430. The For 3-hydroxyacyl-CoA dehydrogenase activity role is filled by histidine 451. Asparagine 454 is an NAD(+) binding site. Residues asparagine 501 and tyrosine 661 each contribute to the substrate site.

The protein in the N-terminal section; belongs to the enoyl-CoA hydratase/isomerase family. It in the C-terminal section; belongs to the 3-hydroxyacyl-CoA dehydrogenase family. In terms of assembly, heterotetramer of two alpha chains (FadB) and two beta chains (FadA).

The catalysed reaction is a (3S)-3-hydroxyacyl-CoA + NAD(+) = a 3-oxoacyl-CoA + NADH + H(+). It catalyses the reaction a (3S)-3-hydroxyacyl-CoA = a (2E)-enoyl-CoA + H2O. It carries out the reaction a 4-saturated-(3S)-3-hydroxyacyl-CoA = a (3E)-enoyl-CoA + H2O. The enzyme catalyses (3S)-3-hydroxybutanoyl-CoA = (3R)-3-hydroxybutanoyl-CoA. The catalysed reaction is a (3Z)-enoyl-CoA = a 4-saturated (2E)-enoyl-CoA. It catalyses the reaction a (3E)-enoyl-CoA = a 4-saturated (2E)-enoyl-CoA. It participates in lipid metabolism; fatty acid beta-oxidation. Functionally, involved in the aerobic and anaerobic degradation of long-chain fatty acids via beta-oxidation cycle. Catalyzes the formation of 3-oxoacyl-CoA from enoyl-CoA via L-3-hydroxyacyl-CoA. It can also use D-3-hydroxyacyl-CoA and cis-3-enoyl-CoA as substrate. This Colwellia psychrerythraea (strain 34H / ATCC BAA-681) (Vibrio psychroerythus) protein is Fatty acid oxidation complex subunit alpha.